A 138-amino-acid chain; its full sequence is Basic phospholipase A2 Sct-N6 (138 aa).

The N-terminal stretch at 1–16 (MRTFWIVAVLLVGVEG) is a signal peptide. Intrachain disulfides connect Cys42-Cys131, Cys44-Cys60, Cys59-Cys111, Cys65-Cys138, Cys66-Cys104, Cys73-Cys97, and Cys91-Cys102. Tyr43, Gly45, and Gly47 together coordinate Ca(2+). His63 is an active-site residue. Asp64 serves as a coordination point for Ca(2+). Residue Asp105 is part of the active site.

This sequence belongs to the phospholipase A2 family. Group II subfamily. D49 sub-subfamily. Ca(2+) is required as a cofactor. Expressed by the venom gland.

It localises to the secreted. The enzyme catalyses a 1,2-diacyl-sn-glycero-3-phosphocholine + H2O = a 1-acyl-sn-glycero-3-phosphocholine + a fatty acid + H(+). Snake venom phospholipase A2 (PLA2) that displays edema-inducing activities, as well as presynaptic neurotoxicity and low myotoxicity. PLA2 catalyzes the calcium-dependent hydrolysis of the 2-acyl groups in 3-sn-phosphoglycerides. The sequence is that of Basic phospholipase A2 Sct-N6 from Sistrurus tergeminus (Western massasauga).